The following is a 98-amino-acid chain: NADH-ubiquinone oxidoreductase chain 4L (98 aa).

3 helical membrane passes run 1–21 (MSMV…GLLM), 29–49 (SLLC…VAIL), and 61–81 (IILL…LVMV).

Belongs to the complex I subunit 4L family. As to quaternary structure, core subunit of respiratory chain NADH dehydrogenase (Complex I) which is composed of 45 different subunits.

It is found in the mitochondrion inner membrane. The catalysed reaction is a ubiquinone + NADH + 5 H(+)(in) = a ubiquinol + NAD(+) + 4 H(+)(out). Its function is as follows. Core subunit of the mitochondrial membrane respiratory chain NADH dehydrogenase (Complex I) which catalyzes electron transfer from NADH through the respiratory chain, using ubiquinone as an electron acceptor. Part of the enzyme membrane arm which is embedded in the lipid bilayer and involved in proton translocation. The polypeptide is NADH-ubiquinone oxidoreductase chain 4L (MT-ND4L) (Puma concolor (Mountain lion)).